The primary structure comprises 149 residues: Hydroalkoxylation enzyme phnH (149 aa).

Residues 1-18 (MKFTYLVSLAAFAVTALG) form the signal peptide. N-linked (GlcNAc...) asparagine glycosylation is found at Asn-33 and Asn-127.

Homotetramer.

It catalyses the reaction 2,4,7,9-tetrahydroxy-6-methyl-8-(2-methylbut-3-en-2-yl)-1-oxo-1H-phenalen-3-ol = (2'R)-atrovenetin. It functions in the pathway secondary metabolite biosynthesis. In terms of biological role, hydroalkoxylation enzyme; part of the gene cluster that mediates the biosynthesis of phenalenones such as herqueinone, compounds that have been reported to treat tumors, bacterial infections and/or mycoses, and rheumatic diseases. The non-reducing polyketide synthase phnA synthesizes the heptaketide backbone and cyclizes it into the angular, hemiketal-containing naphtho-gamma-pyrone prephenalenone. The product template (PT) domain of phnA catalyzes only the C4-C9 aldol condensation, which is unprecedented among known PT domains. The transformation of prephenalenone to phenalenones requires an FAD-dependent monooxygenase phnB, which catalyzes the C2 aromatic hydroxylation of prephenalenone and ring opening of the gamma-pyrone ring simultaneously. Subsequent intramolecular deprotonation of C3 phenolic oxygen accelerates phenalenone ring closure to yield the tricyclic phenalenone core with a C2 hydroxylation. The prenyltransferase phnF further catalyzes reverse C-prenylation of phenalenone by direct electrophilic substitution at C6, or possibly via first a forward O-prenylation of a neighboring phenol in phenalenone, followed by a Claisen rearrangement. The hydroalkoxylation enzyme phnH catalyzes the 5-exo-trig cyclization via acid catalysis after the spontaneous deprotonation of 7-OH, which leads to the formation of the dihydrobenzofuran atrovenetin. Atrovenetin is further converted to deoxyherqueinone by the O-methyltransferase phnC which can methylate C2-OH to stabilize the northern portion of the phenalenone core. Finally, the oxidoreductase phnG converts deoxyherqueinone to herqueinone via C6 hydroxylation. This Penicillium herquei protein is Hydroalkoxylation enzyme phnH.